The primary structure comprises 294 residues: Nucleotide-binding protein Reut_A0350 (294 aa).

G8 to S15 is a binding site for ATP. Position 57–60 (D57–S60) interacts with GTP.

Belongs to the RapZ-like family.

In terms of biological role, displays ATPase and GTPase activities. In Cupriavidus pinatubonensis (strain JMP 134 / LMG 1197) (Cupriavidus necator (strain JMP 134)), this protein is Nucleotide-binding protein Reut_A0350.